Reading from the N-terminus, the 48-residue chain is Large ribosomal subunit protein bL32 (48 aa).

The tract at residues 1–20 (MAVPDRRVSKTRAAKRRTHY) is disordered. Over residues 9–20 (SKTRAAKRRTHY) the composition is skewed to basic residues.

The protein belongs to the bacterial ribosomal protein bL32 family.

The sequence is that of Large ribosomal subunit protein bL32 from Helicobacter acinonychis (strain Sheeba).